The chain runs to 229 residues: Ribonuclease 3 (229 aa).

Residues 4–133 (WEELQESVGF…FIGALYLDNG (130 aa)) enclose the RNase III domain. E46 is a Mg(2+) binding site. D50 is a catalytic residue. Positions 119 and 122 each coordinate Mg(2+). E122 is a catalytic residue. The DRBM domain occupies 159-228 (DYKTQLQEIV…AQFAINQLTH (70 aa)).

Belongs to the ribonuclease III family. As to quaternary structure, homodimer. Mg(2+) is required as a cofactor.

Its subcellular location is the cytoplasm. The enzyme catalyses Endonucleolytic cleavage to 5'-phosphomonoester.. Digests double-stranded RNA. Involved in the processing of primary rRNA transcript to yield the immediate precursors to the large and small rRNAs (23S and 16S). Processes some mRNAs, and tRNAs when they are encoded in the rRNA operon. Processes pre-crRNA and tracrRNA of type II CRISPR loci if present in the organism. In Listeria monocytogenes serotype 4b (strain CLIP80459), this protein is Ribonuclease 3.